We begin with the raw amino-acid sequence, 308 residues long: Phosphoribosylaminoimidazole-succinocarboxamide synthase (308 aa).

This sequence belongs to the SAICAR synthetase family.

The enzyme catalyses 5-amino-1-(5-phospho-D-ribosyl)imidazole-4-carboxylate + L-aspartate + ATP = (2S)-2-[5-amino-1-(5-phospho-beta-D-ribosyl)imidazole-4-carboxamido]succinate + ADP + phosphate + 2 H(+). The protein operates within purine metabolism; IMP biosynthesis via de novo pathway; 5-amino-1-(5-phospho-D-ribosyl)imidazole-4-carboxamide from 5-amino-1-(5-phospho-D-ribosyl)imidazole-4-carboxylate: step 1/2. The sequence is that of Phosphoribosylaminoimidazole-succinocarboxamide synthase from Xylella fastidiosa (strain 9a5c).